The chain runs to 305 residues: Ornithine carbamoyltransferase (305 aa).

Residues 52-55 (STRT), Q79, R103, and 130-133 (HPCQ) contribute to the carbamoyl phosphate site. L-ornithine is bound by residues N161, D222, and 226–227 (SM). Carbamoyl phosphate-binding positions include 262-263 (CL) and R290.

This sequence belongs to the aspartate/ornithine carbamoyltransferase superfamily. OTCase family.

The protein localises to the cytoplasm. It carries out the reaction carbamoyl phosphate + L-ornithine = L-citrulline + phosphate + H(+). It functions in the pathway amino-acid biosynthesis; L-arginine biosynthesis; L-arginine from L-ornithine and carbamoyl phosphate: step 1/3. Its function is as follows. Reversibly catalyzes the transfer of the carbamoyl group from carbamoyl phosphate (CP) to the N(epsilon) atom of ornithine (ORN) to produce L-citrulline. This is Ornithine carbamoyltransferase from Pelobacter propionicus (strain DSM 2379 / NBRC 103807 / OttBd1).